Consider the following 147-residue polypeptide: Deoxyuridine 5'-triphosphate nucleotidohydrolase (147 aa).

Residues 67 to 69 (RSG), Asn-80, and 84 to 86 (TID) each bind substrate.

Belongs to the dUTPase family. Mg(2+) is required as a cofactor.

It carries out the reaction dUTP + H2O = dUMP + diphosphate + H(+). The protein operates within pyrimidine metabolism; dUMP biosynthesis; dUMP from dCTP (dUTP route): step 2/2. In terms of biological role, this enzyme is involved in nucleotide metabolism: it produces dUMP, the immediate precursor of thymidine nucleotides and it decreases the intracellular concentration of dUTP so that uracil cannot be incorporated into DNA. This chain is Deoxyuridine 5'-triphosphate nucleotidohydrolase, found in Anaeromyxobacter sp. (strain Fw109-5).